A 617-amino-acid polypeptide reads, in one-letter code: Chaperone protein DnaK (617 aa).

Residues 579–617 (KAQQEAQQASGEAGSADARGPDETVVDADYEVVDDEKRK) form a disordered region. The span at 580–594 (AQQEAQQASGEAGSA) shows a compositional bias: low complexity. Residues 602 to 617 (TVVDADYEVVDDEKRK) show a composition bias toward acidic residues.

It belongs to the heat shock protein 70 family.

Acts as a chaperone. The sequence is that of Chaperone protein DnaK from Methanosarcina acetivorans (strain ATCC 35395 / DSM 2834 / JCM 12185 / C2A).